We begin with the raw amino-acid sequence, 310 residues long: Olfactory receptor 4K14 (310 aa).

The Extracellular segment spans residues 1 to 25 (MDPQNYSLVSEFVLHGLCTSRHLQN). N-linked (GlcNAc...) asparagine glycosylation is present at Asn-5. A helical membrane pass occupies residues 26-49 (FFFIFFFGVYVAIMLGNLLILVTV). The Cytoplasmic portion of the chain corresponds to 50–58 (ISDPCLHSS). Residues 59 to 80 (PMYFLLGNLAFLDMWLASFATP) traverse the membrane as a helical segment. Over 81–101 (KMIRDFLSDQKLISFGGCMAQ) the chain is Extracellular. Cysteines 98 and 190 form a disulfide. Residues 102–121 (IFFLHFTGGAEMVLLVSMAY) form a helical membrane-spanning segment. Residues 122–140 (DRYVAICKPLHYMTLMSWQ) are Cytoplasmic-facing. A helical membrane pass occupies residues 141–159 (TCIRLVLASWVVGFVHSIS). Over 160 to 196 (QVAFTVNLPYCGPNEVDSFFCDLPLVIKLACMDTYVL) the chain is Extracellular. A helical transmembrane segment spans residues 197 to 220 (GIIMISDSGLLSLSCFLLLLISYT). The Cytoplasmic segment spans residues 221 to 236 (VILLAIRQRAAGSTSK). A helical membrane pass occupies residues 237 to 259 (ALSTCSAHIMVVTLFFGPCIFVY). Topologically, residues 260-270 (VRPFSRFSVDK) are extracellular. Residues 271–290 (LLSVFYTIFTPLLNPIIYTL) traverse the membrane as a helical segment. At 291-310 (RNEEMKAAMKKLQNRRVTFQ) the chain is on the cytoplasmic side.

The protein belongs to the G-protein coupled receptor 1 family.

It localises to the cell membrane. Its function is as follows. Odorant receptor. This chain is Olfactory receptor 4K14 (OR4K14), found in Homo sapiens (Human).